We begin with the raw amino-acid sequence, 200 residues long: Holliday junction branch migration complex subunit RuvA (200 aa).

Residues 1 to 64 (MYAYFRGELI…EDLMQLYGFI (64 aa)) are domain I. The tract at residues 65–143 (EEEERQLFLL…KLQQTRPGKT (79 aa)) is domain II. Residues 144-154 (AGAGSVASLSE) are flexible linker. A domain III region spans residues 154-200 (EDALQALMTLGFSRASAQQAVTRALLSAENPGVEDIVREALQNIRNH).

It belongs to the RuvA family. As to quaternary structure, homotetramer. Forms an RuvA(8)-RuvB(12)-Holliday junction (HJ) complex. HJ DNA is sandwiched between 2 RuvA tetramers; dsDNA enters through RuvA and exits via RuvB. An RuvB hexamer assembles on each DNA strand where it exits the tetramer. Each RuvB hexamer is contacted by two RuvA subunits (via domain III) on 2 adjacent RuvB subunits; this complex drives branch migration. In the full resolvosome a probable DNA-RuvA(4)-RuvB(12)-RuvC(2) complex forms which resolves the HJ.

The protein resides in the cytoplasm. In terms of biological role, the RuvA-RuvB-RuvC complex processes Holliday junction (HJ) DNA during genetic recombination and DNA repair, while the RuvA-RuvB complex plays an important role in the rescue of blocked DNA replication forks via replication fork reversal (RFR). RuvA specifically binds to HJ cruciform DNA, conferring on it an open structure. The RuvB hexamer acts as an ATP-dependent pump, pulling dsDNA into and through the RuvAB complex. HJ branch migration allows RuvC to scan DNA until it finds its consensus sequence, where it cleaves and resolves the cruciform DNA. The polypeptide is Holliday junction branch migration complex subunit RuvA (Prosthecochloris aestuarii (strain DSM 271 / SK 413)).